Here is a 633-residue protein sequence, read N- to C-terminus: Basic helix-loop-helix ARNT-like protein 1 (633 aa).

The interval 1–65 is disordered; that stretch reads MADQRMDISS…GMDTDKDDQH (65 aa). Serine 17 carries the post-translational modification Phosphoserine; by GSK3-beta. Residues 24–33 show a composition bias toward polar residues; it reads ISSSLSTSGV. Residues 36–41 carry the Nuclear localization signal motif; the sequence is NRKRKG. A bHLH domain is found at 79–132; it reads NAREAHSQIEKRRRDKMNSFIDELASLVPTCNAMSRKLDKLTVLRMAVQHMKTL. Residue serine 85 is modified to Phosphoserine. Serine 97 bears the Phosphoserine; by CK2 mark. A Nuclear export signal 1 motif is present at residues 149 to 159; that stretch reads LSDDELKHLIL. Positions 150–222 constitute a PAS 1 domain; that stretch reads SDDELKHLIL…EQLSSSDTAP (73 aa). A Glycyl lysine isopeptide (Lys-Gly) (interchain with G-Cter in SUMO2 and SUMO3) cross-link involves residue lysine 259. Lysine 266 participates in a covalent cross-link: Glycyl lysine isopeptide (Lys-Gly) (interchain with G-Cter in SUMO). A PAS 2 domain is found at 333–403; that stretch reads PQPVNGEIRV…ECHRQVLQTR (71 aa). The short motif at 368–376 is the Nuclear export signal 2 element; the sequence is LAYLPQELL. Residues 408-451 enclose the PAC domain; sequence TNCYKFKIKDGSFITLRSRWFSFMNPWTKEVEYIVSTNTVVSTS. Disordered stretches follow at residues 469 to 499 and 518 to 578; these read SMDSVLQAGEGGPKRSHPTVPGIPGGTRAGA and GSSP…DNSS. Low complexity predominate over residues 518-528; it reads GSSPSSCGSSP. Lysine 545 carries the N6-acetyllysine modification. Polar residues predominate over residues 563 to 578; that stretch reads GQIQDSSGYPYSDNSS.

Component of the circadian clock oscillator which includes the CRY1/2 proteins, CLOCK or NPAS2, BMAL1 or BMAL2, CSNK1D and/or CSNK1E, TIMELESS and the PER1/2/3 proteins. Forms a heterodimer with CLOCK. The CLOCK-BMAL1 heterodimer is required for E-box-dependent transactivation, for CLOCK nuclear translocation and degradation, and, for phosphorylation of both CLOCK and BMAL1. Interacts with PER1, PER2, CRY1 and CRY2 and this interaction requires a translocation to the nucleus. Interaction of the CLOCK-BMAL1 heterodimer with PER or CRY inhibits transcription activation. Interacts with NPAS2. In terms of processing, ubiquitinated, leading to its proteasomal degradation. Deubiquitinated by USP9X. Post-translationally, O-glycosylated; contains O-GlcNAc. O-glycosylation by OGT prevents protein degradation by inhibiting ubiquitination. It also stabilizes the CLOCK-BMAL1 heterodimer thereby increasing CLOCK-BMAL1-mediated transcription of genes in the negative loop of the circadian clock such as PER1/2/3 and CRY1/2. Acetylated on Lys-545 by CLOCK during the repression phase of the circadian cycle. Acetylation facilitates recruitment of CRY1 protein and initiates the repression phase of the circadian cycle. Acetylated at Lys-545 by KAT5 during the activation phase of the cycle, leading to recruitment of the positive transcription elongation factor b (P-TEFb) and BRD4, followed by productive elongation of circadian transcripts. Deacetylated by SIRT1, which may result in decreased protein stability. In terms of processing, phosphorylated upon dimerization with CLOCK. Phosphorylation enhances the transcriptional activity, alters the subcellular localization and decreases the stability of the CLOCK-BMAL1 heterodimer by promoting its degradation. Phosphorylation shows circadian variations in the liver with a peak between CT10 to CT14. Phosphorylation at Ser-97 by CK2 is essential for its nuclear localization, its interaction with CLOCK and controls CLOCK nuclear entry. Dephosphorylation at Ser-85 is important for dimerization with CLOCK and transcriptional activity. Post-translationally, sumoylated on Lys-266 upon dimerization with CLOCK. Predominantly conjugated to poly-SUMO2/3 rather than SUMO1 and the level of these conjugates undergo rhythmic variation, peaking at CT9-CT12. Sumoylation localizes it exclusively to the PML body and promotes its ubiquitination in the PML body, ubiquitin-dependent proteasomal degradation and the transcriptional activity of the CLOCK-BMAL1 heterodimer. Undergoes lysosome-mediated degradation in a time-dependent manner in the liver. Expressed in pineal gland and retina.

The protein localises to the nucleus. It localises to the cytoplasm. It is found in the PML body. Functionally, transcriptional activator which forms a core component of the circadian clock. The circadian clock, an internal time-keeping system, regulates various physiological processes through the generation of approximately 24 hour circadian rhythms in gene expression, which are translated into rhythms in metabolism and behavior. It is derived from the Latin roots 'circa' (about) and 'diem' (day) and acts as an important regulator of a wide array of physiological functions including metabolism, sleep, body temperature, blood pressure, endocrine, immune, cardiovascular, and renal function. Consists of two major components: the central clock, residing in the suprachiasmatic nucleus (SCN) of the brain, and the peripheral clocks that are present in nearly every tissue and organ system. Both the central and peripheral clocks can be reset by environmental cues, also known as Zeitgebers (German for 'timegivers'). The predominant Zeitgeber for the central clock is light, which is sensed by retina and signals directly to the SCN. The central clock entrains the peripheral clocks through neuronal and hormonal signals, body temperature and feeding-related cues, aligning all clocks with the external light/dark cycle. Circadian rhythms allow an organism to achieve temporal homeostasis with its environment at the molecular level by regulating gene expression to create a peak of protein expression once every 24 hours to control when a particular physiological process is most active with respect to the solar day. Transcription and translation of core clock components (CLOCK, NPAS2, BMAL1, BMAL2, PER1, PER2, PER3, CRY1 and CRY2) plays a critical role in rhythm generation, whereas delays imposed by post-translational modifications (PTMs) are important for determining the period (tau) of the rhythms (tau refers to the period of a rhythm and is the length, in time, of one complete cycle). A diurnal rhythm is synchronized with the day/night cycle, while the ultradian and infradian rhythms have a period shorter and longer than 24 hours, respectively. Disruptions in the circadian rhythms contribute to the pathology of cardiovascular diseases, cancer, metabolic syndromes and aging. A transcription/translation feedback loop (TTFL) forms the core of the molecular circadian clock mechanism. Transcription factors, CLOCK or NPAS2 and BMAL1 or BMAL2, form the positive limb of the feedback loop, act in the form of a heterodimer and activate the transcription of core clock genes and clock-controlled genes (involved in key metabolic processes), harboring E-box elements (5'-CACGTG-3') within their promoters. The core clock genes: PER1/2/3 and CRY1/2 which are transcriptional repressors form the negative limb of the feedback loop and interact with the CLOCK|NPAS2-BMAL1|BMAL2 heterodimer inhibiting its activity and thereby negatively regulating their own expression. This heterodimer also activates nuclear receptors NR1D1/2 and RORA/B/G, which form a second feedback loop and which activate and repress BMAL1 transcription, respectively. The preferred binding motif for the CLOCK-BMAL1 heterodimer is 5'-CACGTGA-3', which contains a flanking adenine nucleotide at the 3-prime end of the canonical 6-nucleotide E-box sequence. CLOCK specifically binds to the half-site 5'-CAC-3', while BMAL1 binds to the half-site 5'-GTGA-3'. Essential for the rhythmic interaction of CLOCK with ASS1 and plays a critical role in positively regulating CLOCK-mediated acetylation of ASS1. Plays a role in protecting against lethal sepsis by limiting the expression of immune checkpoint protein CD274 in macrophages in a PKM2-dependent manner. The protein is Basic helix-loop-helix ARNT-like protein 1 (BMAL1) of Gallus gallus (Chicken).